The primary structure comprises 95 residues: Small ribosomal subunit protein bS18 (95 aa).

The protein belongs to the bacterial ribosomal protein bS18 family. In terms of assembly, part of the 30S ribosomal subunit. Forms a tight heterodimer with protein bS6.

Its function is as follows. Binds as a heterodimer with protein bS6 to the central domain of the 16S rRNA, where it helps stabilize the platform of the 30S subunit. This is Small ribosomal subunit protein bS18 from Rickettsia typhi (strain ATCC VR-144 / Wilmington).